Reading from the N-terminus, the 524-residue chain is Cytochrome P450 monooxygenase ATR4 (524 aa).

Residues 13 to 36 (IITYLDSLTWVGMALPLFSLCWAI) traverse the membrane as a helical segment. Residues N291, N444, and N454 are each glycosylated (N-linked (GlcNAc...) asparagine).

Belongs to the cytochrome P450 family. Heme serves as cofactor.

It is found in the membrane. The protein operates within mycotoxin biosynthesis. Its function is as follows. Cytochrome P450 monooxygenase; part of the core atranone cluster (CAC) which products are predicted to catalyze most or all steps of mycotoxin atranone synthesis, starting from geranylgeranyl pyrophosphate (GGPP). The initial cyclization of GGPP to dolabellane is probably performed by the terpene cyclase ATR13. The Baeyer-Villiger oxidation near the end of the atranone synthesis, which converts atranones D and E to atranones F and G is predicted to be catalyzed by the monooxygenase ATR8. Of the CAC's other predicted gene products, the reducing PKS ATR6 might synthesize a polyketide chain. This polyketide is probably transferred onto the atranone backbone by the polyketide transferase ATR5. Other predicted CAC products include 4 oxygenases (ATR2, ATR3, ATR4, and ATR14), 3 short-chain reductases (ATR7, ATR9, and ATR10), and a methyltransferase (ATR12). These may all be involved in the various steps of atranone biosynthesis, although their specific roles must await experimental determination. The chain is Cytochrome P450 monooxygenase ATR4 from Stachybotrys chlorohalonatus (strain IBT 40285).